The chain runs to 736 residues: Melanotransferrin (736 aa).

The signal sequence occupies residues 1-19 (MRCRSAAMWIFLALRTALG). 2 Transferrin-like domains span residues 23–357 (VRWC…GLLC) and 366–706 (LRWC…GMQS). Cystine bridges form between C26–C63 and C36–C54. 2 residues coordinate Fe(3+): D78 and Y107. N118 carries an N-linked (GlcNAc...) asparagine glycan. 4 cysteine pairs are disulfide-bonded: C130/C216, C172/C189, C186/C199, and C257/C271. T132 is a binding site for hydrogencarbonate. N-linked (GlcNAc...) asparagine glycosylation occurs at N135. Residues R136, V138, and G139 each contribute to the hydrogencarbonate site. Y210 contacts Fe(3+). Residues H279 and Y451 each coordinate Fe(3+). N-linked (GlcNAc...) asparagine glycosylation is present at N515. H625 is a Fe(3+) binding site. A lipid anchor (GPI-anchor amidated glycine) is attached at G711. The propeptide at 712–736 (AAVGAPGASLLPLLPLAVGLLLSSL) is removed in mature form.

The protein belongs to the transferrin family.

Its subcellular location is the cell membrane. In terms of biological role, involved in iron cellular uptake. Seems to be internalized and then recycled back to the cell membrane. Binds a single atom of iron per subunit. Could also bind zinc. In Oryctolagus cuniculus (Rabbit), this protein is Melanotransferrin.